We begin with the raw amino-acid sequence, 214 residues long: Ribonuclease T (214 aa).

Residues 20 to 195 (VVVDVETAGF…YDTQQTAELF (176 aa)) form the Exonuclease domain. Positions 23, 25, 182, and 187 each coordinate Mg(2+). His182 (proton donor/acceptor) is an active-site residue.

This sequence belongs to the RNase T family. In terms of assembly, homodimer. Mg(2+) serves as cofactor.

In terms of biological role, trims short 3' overhangs of a variety of RNA species, leaving a one or two nucleotide 3' overhang. Responsible for the end-turnover of tRNA: specifically removes the terminal AMP residue from uncharged tRNA (tRNA-C-C-A). Also appears to be involved in tRNA biosynthesis. This is Ribonuclease T from Vibrio campbellii (strain ATCC BAA-1116).